The following is a 237-amino-acid chain: MARRPTPPGTPQPTGIGHIVDLVRHAIPPLHPAGLPFVLAPLGVAALGRNRKWVRRAGLTTAAACATFFRHPHRVPPNRIGVVVAPADGEVALVDNAVPPAELNLGSEPRPRVSIFLSVLDVHVQRSPVGGTVKEVVHQAGKFLSADLADASEVNERNSMLIETADGHDVAVVQIAGLLARRIVCYAGVGDVLPIGDTYGLIRFGSRVDTYFPAGTTLLVEPGQRTIGAETVIAQLP.

Serine 206 serves as the catalytic Schiff-base intermediate with substrate; via pyruvic acid. Pyruvic acid (Ser); by autocatalysis is present on serine 206.

Belongs to the phosphatidylserine decarboxylase family. PSD-A subfamily. As to quaternary structure, heterodimer of a large membrane-associated beta subunit and a small pyruvoyl-containing alpha subunit. Requires pyruvate as cofactor. In terms of processing, is synthesized initially as an inactive proenzyme. Formation of the active enzyme involves a self-maturation process in which the active site pyruvoyl group is generated from an internal serine residue via an autocatalytic post-translational modification. Two non-identical subunits are generated from the proenzyme in this reaction, and the pyruvate is formed at the N-terminus of the alpha chain, which is derived from the carboxyl end of the proenzyme. The post-translation cleavage follows an unusual pathway, termed non-hydrolytic serinolysis, in which the side chain hydroxyl group of the serine supplies its oxygen atom to form the C-terminus of the beta chain, while the remainder of the serine residue undergoes an oxidative deamination to produce ammonia and the pyruvoyl prosthetic group on the alpha chain.

The protein resides in the cell membrane. It catalyses the reaction a 1,2-diacyl-sn-glycero-3-phospho-L-serine + H(+) = a 1,2-diacyl-sn-glycero-3-phosphoethanolamine + CO2. It participates in phospholipid metabolism; phosphatidylethanolamine biosynthesis; phosphatidylethanolamine from CDP-diacylglycerol: step 2/2. In terms of biological role, catalyzes the formation of phosphatidylethanolamine (PtdEtn) from phosphatidylserine (PtdSer). In Rhodococcus erythropolis (strain PR4 / NBRC 100887), this protein is Phosphatidylserine decarboxylase proenzyme.